The sequence spans 587 residues: Glutamine--tRNA ligase (587 aa).

Positions 58 to 68 (PEPNGYLHIGH) match the 'HIGH' region motif. ATP-binding positions include 59–61 (EPN) and 65–71 (HIGHAKS). Residues D91 and Y240 each contribute to the L-glutamine site. ATP-binding positions include T259 and 294 to 295 (RL). The 'KMSKS' region signature appears at 301–305 (VTSKR).

This sequence belongs to the class-I aminoacyl-tRNA synthetase family. In terms of assembly, monomer.

It is found in the cytoplasm. The catalysed reaction is tRNA(Gln) + L-glutamine + ATP = L-glutaminyl-tRNA(Gln) + AMP + diphosphate. This Bordetella pertussis (strain Tohama I / ATCC BAA-589 / NCTC 13251) protein is Glutamine--tRNA ligase.